Reading from the N-terminus, the 179-residue chain is Peptide deformylase (179 aa).

Positions 103 and 145 each coordinate Fe cation. Glu146 is a catalytic residue. Position 149 (His149) interacts with Fe cation.

This sequence belongs to the polypeptide deformylase family. Requires Fe(2+) as cofactor.

The catalysed reaction is N-terminal N-formyl-L-methionyl-[peptide] + H2O = N-terminal L-methionyl-[peptide] + formate. In terms of biological role, removes the formyl group from the N-terminal Met of newly synthesized proteins. Requires at least a dipeptide for an efficient rate of reaction. N-terminal L-methionine is a prerequisite for activity but the enzyme has broad specificity at other positions. The sequence is that of Peptide deformylase from Leptospira biflexa serovar Patoc (strain Patoc 1 / Ames).